The following is a 1395-amino-acid chain: G-protein coupled receptor-associated sorting protein 1 (1395 aa).

3 disordered regions span residues 1-25 (MTGA…VVGG), 45-83 (QIMP…AKAI), and 269-288 (TNTW…FRSK). Over residues 269 to 281 (TNTWSGPREDPNS) the composition is skewed to basic and acidic residues. At S297 the chain carries Phosphoserine. The interval 446-469 (SMGTGASSKSRPRTDGERIGDSLF) is disordered. Positions 457–469 (PRTDGERIGDSLF) are enriched in basic and acidic residues. Residues S631 and S899 each carry the phosphoserine modification. The interval 899-1395 (SETEEETIFG…QNDPEGDQEN (497 aa)) is OPRD1-binding.

The protein belongs to the GPRASP family. In terms of assembly, interacts with cytoplasmic tails of a variety of G-protein coupled receptors such as D2 dopamine receptor/DRD2, delta opioid receptor/OPRD1, beta-2 adrenergic receptor/ADRB2 and D4 dopamine receptor/DRD4. Interacts with PER1. Interacts with BECN2; the interaction is direct. As to expression, expressed in the brain, with lower expression in medulla, spinal cord and substantia nigra.

The protein resides in the cytoplasm. In terms of biological role, modulates lysosomal sorting and functional down-regulation of a variety of G-protein coupled receptors. Targets receptors for degradation in lysosomes via its interaction with BECN2. The sequence is that of G-protein coupled receptor-associated sorting protein 1 (GPRASP1) from Homo sapiens (Human).